The primary structure comprises 481 residues: Aspartyl/glutamyl-tRNA(Asn/Gln) amidotransferase subunit B (481 aa).

This sequence belongs to the GatB/GatE family. GatB subfamily. As to quaternary structure, heterotrimer of A, B and C subunits.

It carries out the reaction L-glutamyl-tRNA(Gln) + L-glutamine + ATP + H2O = L-glutaminyl-tRNA(Gln) + L-glutamate + ADP + phosphate + H(+). It catalyses the reaction L-aspartyl-tRNA(Asn) + L-glutamine + ATP + H2O = L-asparaginyl-tRNA(Asn) + L-glutamate + ADP + phosphate + 2 H(+). In terms of biological role, allows the formation of correctly charged Asn-tRNA(Asn) or Gln-tRNA(Gln) through the transamidation of misacylated Asp-tRNA(Asn) or Glu-tRNA(Gln) in organisms which lack either or both of asparaginyl-tRNA or glutaminyl-tRNA synthetases. The reaction takes place in the presence of glutamine and ATP through an activated phospho-Asp-tRNA(Asn) or phospho-Glu-tRNA(Gln). The protein is Aspartyl/glutamyl-tRNA(Asn/Gln) amidotransferase subunit B of Pseudomonas fluorescens (strain ATCC BAA-477 / NRRL B-23932 / Pf-5).